The chain runs to 109 residues: Lipoprotein BsmA (109 aa).

A signal peptide spans 1-24 (MVSRKRNSVIYRFASLLLVLMLSA). Cys25 carries N-palmitoyl cysteine lipidation. The S-diacylglycerol cysteine moiety is linked to residue Cys25.

The protein belongs to the BhsA/McbA family.

It is found in the cell membrane. Functionally, involved in protection of biofilms against oxidative stress. The chain is Lipoprotein BsmA (bsmA) from Escherichia coli (strain K12).